We begin with the raw amino-acid sequence, 239 residues long: Uridylate kinase (239 aa).

13–16 is an ATP binding site; that stretch reads KLSG. G55 contributes to the UMP binding site. G56 and R60 together coordinate ATP. Residues D75 and 136–143 contribute to the UMP site; that span reads TGNPFFTT. The ATP site is built by T163, N164, Y169, and D172.

The protein belongs to the UMP kinase family. Homohexamer.

The protein resides in the cytoplasm. The catalysed reaction is UMP + ATP = UDP + ADP. It participates in pyrimidine metabolism; CTP biosynthesis via de novo pathway; UDP from UMP (UMPK route): step 1/1. With respect to regulation, inhibited by UTP. Functionally, catalyzes the reversible phosphorylation of UMP to UDP. In Neisseria meningitidis serogroup C / serotype 2a (strain ATCC 700532 / DSM 15464 / FAM18), this protein is Uridylate kinase.